We begin with the raw amino-acid sequence, 233 residues long: ATP synthase subunit a, chloroplastic (233 aa).

4 helical membrane passes run 82–102 (VPFI…GALI), 121–141 (INTT…AGIS), 177–199 (LFGN…PLIV), and 211–231 (SSIQ…EAIE).

The protein belongs to the ATPase A chain family. In terms of assembly, F-type ATPases have 2 components, CF(1) - the catalytic core - and CF(0) - the membrane proton channel. CF(1) has five subunits: alpha(3), beta(3), gamma(1), delta(1), epsilon(1). CF(0) has four main subunits: a, b, b' and c.

Its subcellular location is the plastid. The protein localises to the chloroplast thylakoid membrane. Functionally, key component of the proton channel; it plays a direct role in the translocation of protons across the membrane. This Galdieria sulphuraria (Red alga) protein is ATP synthase subunit a, chloroplastic.